The primary structure comprises 397 residues: uncharacterized protein (397 aa).

A run of 12 helical transmembrane segments spans residues 10 to 30 (FIIF…YAVM), 48 to 68 (GLLV…VTII), 76 to 96 (PVLL…ALAP), 106 to 126 (ILSA…ASEM), 141 to 161 (GGLT…GDVL), 165 to 185 (AVFS…MAAV), 209 to 229 (LFSF…YTFI), 242 to 262 (VGIT…NFFA), 274 to 294 (MIGV…IAIY), 296 to 316 (AAAI…PPLL), 334 to 354 (VSVS…GMIL), and 363 to 383 (LFAG…FAHL).

The protein belongs to the major facilitator superfamily.

It localises to the cell membrane. This is an uncharacterized protein from Bacillus subtilis (strain 168).